Reading from the N-terminus, the 618-residue chain is UvrABC system protein C (618 aa).

The GIY-YIG domain maps to 15-93; it reads RTPGVYLMKD…IKEHHPRYNI (79 aa). Residues 203–238 form the UVR domain; it reads NNLLRELRERMKMAAEQMNYEEAAFLRDRIRAIEET.

Belongs to the UvrC family. As to quaternary structure, interacts with UvrB in an incision complex.

It is found in the cytoplasm. Functionally, the UvrABC repair system catalyzes the recognition and processing of DNA lesions. UvrC both incises the 5' and 3' sides of the lesion. The N-terminal half is responsible for the 3' incision and the C-terminal half is responsible for the 5' incision. This Syntrophus aciditrophicus (strain SB) protein is UvrABC system protein C.